The following is a 160-amino-acid chain: MFSFLILVFVASVADSVIGTAEVMSHVTAHFGKTLEECREESGLSVDILDEFKHFWSDDFDVVHRELGCAIICMSNKFSLMDDDVRMHHVNMDEYIKGFPNGQVLAEKMVKLIHNCEKQFDTETDDCTRVVKVAACFKKDSRKEGIAPEVAMIEAVIEKY.

An N-terminal signal peptide occupies residues 1–20 (MFSFLILVFVASVADSVIGT). Intrachain disulfides connect Cys38-Cys73, Cys69-Cys127, and Cys116-Cys136.

It belongs to the PBP/GOBP family. Homodimer. As to expression, detected in antenna (at protein level). Expressed at high levels in antenna.

Functionally, present in the aqueous fluid surrounding olfactory sensory dendrites and are thought to aid in the capture and transport of hydrophobic odorants into and through this fluid. This Bombyx mori (Silk moth) protein is General odorant-binding protein 2.